The sequence spans 341 residues: UDP-3-O-acylglucosamine N-acyltransferase (341 aa).

His236 (proton acceptor) is an active-site residue.

It belongs to the transferase hexapeptide repeat family. LpxD subfamily. Homotrimer.

It carries out the reaction a UDP-3-O-[(3R)-3-hydroxyacyl]-alpha-D-glucosamine + a (3R)-hydroxyacyl-[ACP] = a UDP-2-N,3-O-bis[(3R)-3-hydroxyacyl]-alpha-D-glucosamine + holo-[ACP] + H(+). The protein operates within bacterial outer membrane biogenesis; LPS lipid A biosynthesis. In terms of biological role, catalyzes the N-acylation of UDP-3-O-acylglucosamine using 3-hydroxyacyl-ACP as the acyl donor. Is involved in the biosynthesis of lipid A, a phosphorylated glycolipid that anchors the lipopolysaccharide to the outer membrane of the cell. This is UDP-3-O-acylglucosamine N-acyltransferase from Lawsonia intracellularis (strain PHE/MN1-00).